The sequence spans 341 residues: Protein-glutamate methylesterase/protein-glutamine glutaminase 2 (341 aa).

Residues 11 to 126 form the Response regulatory domain; that stretch reads RVLVADDSEL…DLGEYGRLIR (116 aa). A 4-aspartylphosphate modification is found at D62. The CheB-type methylesterase domain occupies 152–341; that stretch reads PARAARVEVV…IPRALRELTR (190 aa). Active-site residues include S166, H193, and D285.

Belongs to the CheB family. In terms of processing, phosphorylated by CheA. Phosphorylation of the N-terminal regulatory domain activates the methylesterase activity.

Its subcellular location is the cytoplasm. It carries out the reaction [protein]-L-glutamate 5-O-methyl ester + H2O = L-glutamyl-[protein] + methanol + H(+). The enzyme catalyses L-glutaminyl-[protein] + H2O = L-glutamyl-[protein] + NH4(+). Its function is as follows. Involved in chemotaxis. Part of a chemotaxis signal transduction system that modulates chemotaxis in response to various stimuli. Catalyzes the demethylation of specific methylglutamate residues introduced into the chemoreceptors (methyl-accepting chemotaxis proteins or MCP) by CheR. Also mediates the irreversible deamidation of specific glutamine residues to glutamic acid. The protein is Protein-glutamate methylesterase/protein-glutamine glutaminase 2 of Anaeromyxobacter dehalogenans (strain 2CP-C).